A 557-amino-acid chain; its full sequence is Urocanate hydratase (557 aa).

Residues 53–54, Gln-131, 177–179, Glu-197, Arg-202, 243–244, 264–268, 274–275, and Tyr-323 contribute to the NAD(+) site; these read GG, GMG, NA, QTSAH, and YL. Cys-411 is a catalytic residue. Gly-493 contacts NAD(+).

It belongs to the urocanase family. The cofactor is NAD(+).

It localises to the cytoplasm. The catalysed reaction is 4-imidazolone-5-propanoate = trans-urocanate + H2O. It functions in the pathway amino-acid degradation; L-histidine degradation into L-glutamate; N-formimidoyl-L-glutamate from L-histidine: step 2/3. Catalyzes the conversion of urocanate to 4-imidazolone-5-propionate. The polypeptide is Urocanate hydratase (Pseudomonas putida (strain ATCC 700007 / DSM 6899 / JCM 31910 / BCRC 17059 / LMG 24140 / F1)).